Here is a 379-residue protein sequence, read N- to C-terminus: UDP-N-acetylglucosamine--N-acetylmuramyl-(pentapeptide) pyrophosphoryl-undecaprenol N-acetylglucosamine transferase (379 aa).

UDP-N-acetyl-alpha-D-glucosamine contacts are provided by residues 10–12 (TGG), Asn-124, and Arg-165. Residues 174-195 (TRDQGPGIRDQEKHMTDSTGPA) form a disordered region. The UDP-N-acetyl-alpha-D-glucosamine site is built by Ser-211, Ile-266, and Gln-311.

It belongs to the glycosyltransferase 28 family. MurG subfamily.

Its subcellular location is the cell inner membrane. It catalyses the reaction di-trans,octa-cis-undecaprenyl diphospho-N-acetyl-alpha-D-muramoyl-L-alanyl-D-glutamyl-meso-2,6-diaminopimeloyl-D-alanyl-D-alanine + UDP-N-acetyl-alpha-D-glucosamine = di-trans,octa-cis-undecaprenyl diphospho-[N-acetyl-alpha-D-glucosaminyl-(1-&gt;4)]-N-acetyl-alpha-D-muramoyl-L-alanyl-D-glutamyl-meso-2,6-diaminopimeloyl-D-alanyl-D-alanine + UDP + H(+). The protein operates within cell wall biogenesis; peptidoglycan biosynthesis. Cell wall formation. Catalyzes the transfer of a GlcNAc subunit on undecaprenyl-pyrophosphoryl-MurNAc-pentapeptide (lipid intermediate I) to form undecaprenyl-pyrophosphoryl-MurNAc-(pentapeptide)GlcNAc (lipid intermediate II). The sequence is that of UDP-N-acetylglucosamine--N-acetylmuramyl-(pentapeptide) pyrophosphoryl-undecaprenol N-acetylglucosamine transferase from Pelobacter propionicus (strain DSM 2379 / NBRC 103807 / OttBd1).